A 1032-amino-acid chain; its full sequence is Protein phosphatase 1 regulatory subunit 12A (1032 aa).

The KVKF motif signature appears at 35 to 38 (KVKF). 6 ANK repeats span residues 39 to 68 (DDGA…DINY), 72 to 101 (DGLT…NINQ), 105 to 134 (EGWI…HVGA), 138 to 164 (EGDT…RQGV), 198 to 227 (SGGT…DVNI), and 231 to 260 (DGWT…DMET). A (3S)-3-hydroxyasparagine; by HIF1AN mark is found at N67 and N100. (3S)-3-hydroxyasparagine; by HIF1AN is present on N226. 2 disordered regions span residues 290 to 553 (LHSE…HRSC) and 588 to 928 (SSTS…RLEK). The segment covering 291 to 300 (HSEKRDKKSP) has biased composition (basic and acidic residues). S299 is modified (phosphoserine). Residues 302-316 (IESTANMENNQPQKT) show a composition bias toward polar residues. Residues 318 to 340 (KNKETLIIEPEKNASRIESLEQE) show a composition bias toward basic and acidic residues. The span at 357–369 (SEEDEEDDSESEA) shows a compositional bias: acidic residues. Residues 383 to 399 (AHTASTQAAPAAVTTPT) show a composition bias toward low complexity. The span at 400-421 (LSSNQGTPTSPVKKFPTSTTKI) shows a compositional bias: polar residues. A phosphoserine mark is found at S422 and S432. Residues 422-432 (SPKEEERKDES) show a composition bias toward basic and acidic residues. Position 443 is a phosphothreonine (T443). Residue S445 is modified to Phosphoserine. Y446 is modified (phosphotyrosine). Low complexity predominate over residues 469–480 (RSASSPRLSSSL). A Phosphoserine; by NUAK1 modification is found at S472. At S473 the chain carries Phosphoserine; by CDK1. S477 is modified (phosphoserine). The segment covering 481 to 491 (DNKEKEKDNKG) has biased composition (basic and acidic residues). 2 positions are modified to phosphoserine: S507 and S509. Residues 540 to 551 (NSSINEGSTYHR) show a composition bias toward polar residues. A Phosphoserine modification is found at S601. Residues 602–612 (PAGTQSSTSNR) show a composition bias toward polar residues. Residues 614–625 (WAEDSTEKEKDS) are compositionally biased toward basic and acidic residues. The residue at position 618 (S618) is a Phosphoserine. Positions 633 to 661 (LVAPTVVSAAASSTTALTTTTAGTLSSTS) are enriched in low complexity. The segment covering 674-683 (VRDEESESQR) has biased composition (basic and acidic residues). The tract at residues 683–866 (RKARSRQARQ…VSFWTQDSDE (184 aa)) is interaction with ROCK2. The span at 684–694 (KARSRQARQSR) shows a compositional bias: basic residues. A phosphoserine; by PKA and PKG; in vitro mark is found at S693 and S696. T697 is subject to Phosphothreonine; by ROCK1, ROCK2, CDC42BP, ZIPK/DAPK3 and RAF1. Residues 719–768 (RTREQENEEKDKEEKEKQDKEKQEEKKESEVSREDEYKQKYSRTYDETYA) are compositionally biased toward basic and acidic residues. Low complexity predominate over residues 774 to 797 (STSSSSTPSSSSLSTLGSSLYASS). A compositionally biased stretch (polar residues) spans 798–812 (QLNRPNSLVGITSAY). Phosphoserine is present on S804. Positions 816-842 (LTKDNEREGEKKEEEKEGEDKSQPKSI) are enriched in basic and acidic residues. Positions 843-854 (RERRRPREKRRS) are enriched in basic residues. Phosphoserine; by ROCK2 is present on S854. Phosphoserine is present on residues S864 and S873. A compositionally biased stretch (basic and acidic residues) spans 869–885 (QERQSDTEDGSSKRDTQ). The span at 886–900 (TDSVSRYDSSSTSSS) shows a compositional bias: low complexity. S905 and S910 each carry phosphoserine. S912 is subject to Phosphoserine; by NUAK1. A compositionally biased stretch (basic and acidic residues) spans 916 to 928 (LEERKPYGSRLEK). A Phosphoserine modification is found at S997.

In terms of assembly, PP1 comprises a catalytic subunit, PPP1CA, PPP1CB or PPP1CC, and one or several targeting or regulatory subunits. PPP1R12A mediates binding to myosin. Interacts with ARHA and CIT. Binds PPP1R12B, ROCK1 and IL16. Interacts directly with PRKG1. Non-covalent dimer of 2 dimers; PRKG1-PRKG1 and PPP1R12A-PPP1R12A. Interacts with SMTNL1. Interacts with PPP1CB; the interaction is direct. Interacts (when phosphorylated at Ser-445, Ser-472 and Ser-910) with 14-3-3. Interacts with ROCK1 and ROCK2. Interacts with isoform 1 and isoform 2 of ZIPK/DAPK3. Interacts with RAF1. Interacts with HIF1AN. Interacts with NCKAP1L. In terms of processing, phosphorylated on upon DNA damage, probably by ATM or ATR. Phosphorylated by CIT (Rho-associated kinase). Phosphorylated cooperatively by ROCK1 and CDC42BP on Thr-697. In vitro, phosphorylation of Ser-696 by PKA and PKG appears to prevent phosphorylation of the inhibitory site Thr-697, probably mediated by PRKG1. May be phosphorylated at Thr-697 by DMPK; may inhibit the myosin phosphatase activity. Phosphorylated at Ser-473 by CDK1 during mitosis, creating docking sites for the POLO box domains of PLK1. Subsequently, PLK1 binds and phosphorylates PPP1R12A. Smooth muscle. Detected in aorta, portal vein, stomach, intestine, bladder and lung.

It is found in the cytoplasm. Its subcellular location is the cytoskeleton. The protein resides in the stress fiber. Functionally, key regulator of protein phosphatase 1C (PPP1C). Mediates binding to myosin. As part of the PPP1C complex, involved in dephosphorylation of PLK1. Capable of inhibiting HIF1AN-dependent suppression of HIF1A activity. The protein is Protein phosphatase 1 regulatory subunit 12A of Rattus norvegicus (Rat).